Consider the following 191-residue polypeptide: Glycerol-3-phosphate acyltransferase (191 aa).

A run of 5 helical transmembrane segments spans residues 5–25 (IVFV…ITKI), 50–70 (CIAA…VYIA), 78–98 (SFHM…PVWL), 112–132 (ILIA…LAVF), and 153–173 (SFFF…LIFF).

Belongs to the PlsY family. In terms of assembly, probably interacts with PlsX.

The protein resides in the cell membrane. It carries out the reaction an acyl phosphate + sn-glycerol 3-phosphate = a 1-acyl-sn-glycero-3-phosphate + phosphate. It participates in lipid metabolism; phospholipid metabolism. Its function is as follows. Catalyzes the transfer of an acyl group from acyl-phosphate (acyl-PO(4)) to glycerol-3-phosphate (G3P) to form lysophosphatidic acid (LPA). This enzyme utilizes acyl-phosphate as fatty acyl donor, but not acyl-CoA or acyl-ACP. The protein is Glycerol-3-phosphate acyltransferase of Wolbachia sp. subsp. Brugia malayi (strain TRS).